The following is a 153-amino-acid chain: uncharacterized protein (153 aa).

The N-terminal stretch at 1–19 (MRKYIPLVLFIFSWPVLCA) is a signal peptide. Active-site residues include Arg46, Glu54, and Arg88.

This sequence belongs to the thermonuclease family.

This is an uncharacterized protein from Escherichia coli.